The following is a 418-amino-acid chain: Calreticulin (418 aa).

A signal peptide spans 1 to 17; the sequence is MLLPVPLLLGLLGLAAA. The interval 18-197 is N-domain; the sequence is EPVVYFKEQF…NSQVESGSLE (180 aa). A Ca(2+)-binding site is contributed by glutamine 26. Lysine 48 is modified (N6-acetyllysine). Lysine 62 and lysine 64 together coordinate Ca(2+). Lysine 64 carries the N6-(2-hydroxyisobutyryl)lysine modification. A disulfide bond links cysteine 105 and cysteine 137. Tyrosine 109, lysine 111, tyrosine 128, and aspartate 135 together coordinate an alpha-D-glucoside. Lysine 159 carries the N6-acetyllysine modification. The 1-1 repeat unit spans residues 191–202; the sequence is VESGSLEDDWDF. The segment at 191–255 is 4 X approximate repeats; sequence VESGSLEDDW…DAKKPEDWDE (65 aa). The interval 193-277 is disordered; it reads SGSLEDDWDF…NPEYKGEWKP (85 aa). The tract at residues 198–308 is P-domain; the sequence is DDWDFLPPKK…YSPDANIYAY (111 aa). Residues 207–251 show a composition bias toward basic and acidic residues; that stretch reads KIKDPDASKPEDWDERAKIDDPTDSKPEDWDKPEHIPDPDAKKPE. Lysine 209 carries the N6-acetyllysine modification. Repeat copies occupy residues 210-221, 227-238, 244-255, 259-269, 273-283, and 287-297. The tract at residues 237 to 270 is interaction with PPIB; the sequence is DKPEHIPDPDAKKPEDWDEEMDGEWEPPVIQNPE. Residues 252–261 are compositionally biased toward acidic residues; the sequence is DWDEEMDGEW. Positions 259 to 297 are 3 X approximate repeats; that stretch reads GEWEPPVIQNPEYKGEWKPRQIDNPDYKGTWIHPEIDNP. Positions 309-418 are C-domain; that stretch reads DSFAVLGLDL…AAAGQAKDEL (110 aa). Aspartate 317 contacts an alpha-D-glucoside. Aspartate 328 provides a ligand contact to Ca(2+). The tract at residues 349 to 418 is disordered; sequence VTKTAEKQMK…AAAGQAKDEL (70 aa). The span at 352–379 shows a compositional bias: basic and acidic residues; sequence TAEKQMKDKQDEEQRLKEEEEEKKRKEE. Residues 380 to 409 show a composition bias toward acidic residues; sequence EEAEEDEEDKDDKEDEDEDEEDKDEEEEEA. Positions 415-418 match the Prevents secretion from ER motif; that stretch reads KDEL.

It belongs to the calreticulin family. In terms of assembly, monomer. Component of an EIF2 complex at least composed of CELF1/CUGBP1, CALR, CALR3, EIF2S1, EIF2S2, HSP90B1 and HSPA5. Interacts with PDIA3/ERp57 and SPACA9. Interacts with TRIM21. Interacts with NR3C1. Interacts with PPIB. Interacts (via P-domain) with PDIA5. Interacts with CLCC1.

The protein localises to the endoplasmic reticulum lumen. It localises to the cytoplasm. It is found in the cytosol. The protein resides in the secreted. Its subcellular location is the extracellular space. The protein localises to the extracellular matrix. It localises to the cell surface. It is found in the sarcoplasmic reticulum lumen. The protein resides in the cytoplasmic vesicle. Its subcellular location is the secretory vesicle. The protein localises to the cortical granule. It localises to the cytolytic granule. In terms of biological role, calcium-binding chaperone that promotes folding, oligomeric assembly and quality control in the endoplasmic reticulum (ER) via the calreticulin/calnexin cycle. This lectin interacts transiently with almost all of the monoglucosylated glycoproteins that are synthesized in the ER. Interacts with the DNA-binding domain of NR3C1 and mediates its nuclear export. Involved in maternal gene expression regulation. May participate in oocyte maturation via the regulation of calcium homeostasis. Present in the cortical granules of non-activated oocytes, is exocytosed during the cortical reaction in response to oocyte activation and might participate in the block to polyspermy. The sequence is that of Calreticulin (CALR) from Oryctolagus cuniculus (Rabbit).